Consider the following 865-residue polypeptide: Protein translocase subunit SecA (865 aa).

ATP-binding positions include Gln-85, 103-107 (GEGKT), and Asp-505. Zn(2+) contacts are provided by Cys-847, Cys-849, Cys-858, and His-859.

This sequence belongs to the SecA family. As to quaternary structure, monomer and homodimer. Part of the essential Sec protein translocation apparatus which comprises SecA, SecYEG and auxiliary proteins SecDF. Other proteins may also be involved. It depends on Zn(2+) as a cofactor.

It localises to the cell membrane. Its subcellular location is the cytoplasm. The catalysed reaction is ATP + H2O + cellular proteinSide 1 = ADP + phosphate + cellular proteinSide 2.. Functionally, part of the Sec protein translocase complex. Interacts with the SecYEG preprotein conducting channel. Has a central role in coupling the hydrolysis of ATP to the transfer of proteins into and across the cell membrane, serving as an ATP-driven molecular motor driving the stepwise translocation of polypeptide chains across the membrane. The chain is Protein translocase subunit SecA from Lactococcus lactis subsp. lactis (strain IL1403) (Streptococcus lactis).